The primary structure comprises 73 residues: MVDFYFIEEKVAYRAAFTTTGKIAATLGLAKTQAVLGPKGYGLLLNEIQWMLRGEINEVWAGLLEALRNNSLI.

The first 30 residues, 1 to 30 (MVDFYFIEEKVAYRAAFTTTGKIAATLGLA), serve as a signal peptide directing secretion.

This is an uncharacterized protein from Archaeoglobus fulgidus (strain ATCC 49558 / DSM 4304 / JCM 9628 / NBRC 100126 / VC-16).